The following is an 808-amino-acid chain: Probable inorganic carbon transporter subunit DabA (808 aa).

Positions 335, 337, 497, and 512 each coordinate Zn(2+).

It belongs to the inorganic carbon transporter (TC 9.A.2) DabA family. As to quaternary structure, forms a complex with DabB. The cofactor is Zn(2+).

Its subcellular location is the cell inner membrane. Part of an energy-coupled inorganic carbon pump. This chain is Probable inorganic carbon transporter subunit DabA, found in Rhodopseudomonas palustris (strain TIE-1).